We begin with the raw amino-acid sequence, 267 residues long: Ribosomal RNA small subunit methyltransferase A (267 aa).

S-adenosyl-L-methionine contacts are provided by asparagine 12, isoleucine 14, glycine 39, glutamate 60, aspartate 84, and asparagine 110.

The protein belongs to the class I-like SAM-binding methyltransferase superfamily. rRNA adenine N(6)-methyltransferase family. RsmA subfamily.

The protein localises to the cytoplasm. The enzyme catalyses adenosine(1518)/adenosine(1519) in 16S rRNA + 4 S-adenosyl-L-methionine = N(6)-dimethyladenosine(1518)/N(6)-dimethyladenosine(1519) in 16S rRNA + 4 S-adenosyl-L-homocysteine + 4 H(+). Its function is as follows. Specifically dimethylates two adjacent adenosines (A1518 and A1519) in the loop of a conserved hairpin near the 3'-end of 16S rRNA in the 30S particle. May play a critical role in biogenesis of 30S subunits. This Mesoplasma florum (strain ATCC 33453 / NBRC 100688 / NCTC 11704 / L1) (Acholeplasma florum) protein is Ribosomal RNA small subunit methyltransferase A.